The chain runs to 257 residues: N-acetylglucosaminyldiphosphoundecaprenol N-acetyl-beta-D-mannosaminyltransferase (257 aa).

It belongs to the glycosyltransferase 26 family. TagA/TarA subfamily.

It carries out the reaction UDP-N-acetyl-alpha-D-mannosamine + N-acetyl-alpha-D-glucosaminyl-di-trans,octa-cis-undecaprenyl diphosphate = N-acetyl-beta-D-mannosaminyl-(1-&gt;4)-N-acetyl-alpha-D-glucosaminyl di-trans,octa-cis-undecaprenyl diphosphate + UDP + H(+). It participates in cell wall biogenesis; poly(ribitol phosphate) teichoic acid biosynthesis. Catalyzes the conversion of GlcNAc-PP-undecaprenol into ManNAc-GlcNAc-PP-undecaprenol, the first committed lipid intermediate in the de novo synthesis of teichoic acid. The polypeptide is N-acetylglucosaminyldiphosphoundecaprenol N-acetyl-beta-D-mannosaminyltransferase (Bacillus spizizenii (strain ATCC 23059 / NRRL B-14472 / W23) (Bacillus subtilis subsp. spizizenii)).